The primary structure comprises 402 residues: 4-hydroxy-3-methylbut-2-enyl diphosphate reductase (402 aa).

Cysteine 66 is a [4Fe-4S] cluster binding site. Histidine 96 provides a ligand contact to (2E)-4-hydroxy-3-methylbut-2-enyl diphosphate. Position 96 (histidine 96) interacts with dimethylallyl diphosphate. Residue histidine 96 participates in isopentenyl diphosphate binding. Cysteine 157 is a [4Fe-4S] cluster binding site. Histidine 185 contributes to the (2E)-4-hydroxy-3-methylbut-2-enyl diphosphate binding site. Histidine 185 is a binding site for dimethylallyl diphosphate. Histidine 185 serves as a coordination point for isopentenyl diphosphate. Glutamate 187 acts as the Proton donor in catalysis. A (2E)-4-hydroxy-3-methylbut-2-enyl diphosphate-binding site is contributed by threonine 250. [4Fe-4S] cluster is bound at residue cysteine 288. (2E)-4-hydroxy-3-methylbut-2-enyl diphosphate is bound by residues serine 317, serine 318, asparagine 319, and serine 379. Serine 317, serine 318, asparagine 319, and serine 379 together coordinate dimethylallyl diphosphate. Isopentenyl diphosphate contacts are provided by serine 317, serine 318, asparagine 319, and serine 379.

It belongs to the IspH family. It depends on [4Fe-4S] cluster as a cofactor.

It catalyses the reaction isopentenyl diphosphate + 2 oxidized [2Fe-2S]-[ferredoxin] + H2O = (2E)-4-hydroxy-3-methylbut-2-enyl diphosphate + 2 reduced [2Fe-2S]-[ferredoxin] + 2 H(+). The catalysed reaction is dimethylallyl diphosphate + 2 oxidized [2Fe-2S]-[ferredoxin] + H2O = (2E)-4-hydroxy-3-methylbut-2-enyl diphosphate + 2 reduced [2Fe-2S]-[ferredoxin] + 2 H(+). It functions in the pathway isoprenoid biosynthesis; dimethylallyl diphosphate biosynthesis; dimethylallyl diphosphate from (2E)-4-hydroxy-3-methylbutenyl diphosphate: step 1/1. Its pathway is isoprenoid biosynthesis; isopentenyl diphosphate biosynthesis via DXP pathway; isopentenyl diphosphate from 1-deoxy-D-xylulose 5-phosphate: step 6/6. Functionally, catalyzes the conversion of 1-hydroxy-2-methyl-2-(E)-butenyl 4-diphosphate (HMBPP) into a mixture of isopentenyl diphosphate (IPP) and dimethylallyl diphosphate (DMAPP). Acts in the terminal step of the DOXP/MEP pathway for isoprenoid precursor biosynthesis. The sequence is that of 4-hydroxy-3-methylbut-2-enyl diphosphate reductase from Nostoc sp. (strain PCC 7120 / SAG 25.82 / UTEX 2576).